Reading from the N-terminus, the 374-residue chain is MEMVNAEAKQSVPLLTPYKMGRFNLSHRVVLAPLTRQKSYGSVPQPHAILYYSQRTSPGGFLIAEATGVSDTAQGYPDTPGIWTKEHVEAWKPIVDAVHAKGGIFFCQIWHVGRVSNRGFQPRRQAPISCTGKPIMPQMRANGIDEARFTPPRRLSIEEIPGIVNDFRLAARNAMEAGFDGVEIHGAHGYLIDQFMKDKVNDRTDEYGGSLQNRCKFALEVVDAVAKEIGPDRVGIRLSPFADYMESGDTNPEALGLYMVESLNKYGILYCHMIEPRMKTVGEIAACSHTLMPMREAFKGTFISAGGFTREDGNEAVAKGRTDLVAYGRWFLANPDLPKRFQLDAPLNKYNRSTFYTSDPVVGYTDYPSLESTA.

An N-acetylmethionine modification is found at Met1. FMN-binding positions include Pro33–Thr35, Ala66, and Gln108. His185 serves as a coordination point for substrate. Tyr190 acts as the Proton donor in catalysis. Residue Arg237 coordinates FMN. Residue Arg277 coordinates substrate. FMN is bound by residues Ala305–Gly307 and Gly328–Arg329.

The protein belongs to the NADH:flavin oxidoreductase/NADH oxidase family. FMN is required as a cofactor. As to expression, expressed at highest levels in roots and cotyledons, and at lower levels in leaves, shoots and flowers (sepals, petals, maturing siliques and developing pollen).

The protein resides in the cytoplasm. The catalysed reaction is (1S,2S)-OPC-8 + NADP(+) = (9S,13S,15Z)-12-oxophyto-10,15-dienoate + NADPH + H(+). It carries out the reaction a 4,5-didehydrojasmonate + NADPH + H(+) = a jasmonate + NADP(+). It participates in lipid metabolism; oxylipin biosynthesis. Functionally, specifically cleaves olefinic bonds in alpha,beta-unsaturated carbonyls and may be involved in detoxification or modification of these reactive compounds. May be involved in the biosynthesis or metabolism of oxylipin signaling molecules. In vitro, reduces 9R,13R-12-oxophytodienoic acid (9R,13R-OPDA) to 9R,13R-OPC-8:0, but only poorly 9S,13S-OPDA, the natural precursor of jasmonic acid (JA). Can detoxify the explosive 2,4,6-trinitrotoluene (TNT) in vitro and in vivo by catalyzing its nitroreduction to form hydroxylamino-dinitrotoluene (HADNT). Functions in an alternative and OPR3-independent pathway for JA biosynthesis. Catalyzes the NADPH-dependent reduction of 4,5-didehydrojasmonates to jasmonates. The sequence is that of 12-oxophytodienoate reductase 2 from Arabidopsis thaliana (Mouse-ear cress).